The primary structure comprises 153 residues: Endoribonuclease YbeY (153 aa).

Zn(2+) contacts are provided by His-116, His-120, and His-126.

Belongs to the endoribonuclease YbeY family. It depends on Zn(2+) as a cofactor.

Its subcellular location is the cytoplasm. Functionally, single strand-specific metallo-endoribonuclease involved in late-stage 70S ribosome quality control and in maturation of the 3' terminus of the 16S rRNA. In Leifsonia xyli subsp. xyli (strain CTCB07), this protein is Endoribonuclease YbeY.